The following is a 378-amino-acid chain: Zinc transporter 7 (378 aa).

Over 1–37 the chain is Cytoplasmic; that stretch reads MLPLSIKDDEYKPPRLNLFRKMSGWFRSILADKTSRN. Residues 38–58 form a helical membrane-spanning segment; that stretch reads LFFFLCLNLSFAFVELLYGVW. Topologically, residues 59–67 are lumenal; the sequence is SNSLGLISD. A helical transmembrane segment spans residues 68–88; sequence SFHMFFDCTALLAGLAASVIS. Residues 89-102 are Cytoplasmic-facing; it reads KWRSNDAFSYGYVR. A helical transmembrane segment spans residues 103–123; that stretch reads AEVLAGFVNGLFLIFTAFFIF. Residues 124-140 are Lumenal-facing; it reads SEGVERALEPPDVHHER. A helical transmembrane segment spans residues 141-161; that stretch reads LLPVSILGFIVNLIGIFVFQH. Residues 161 to 223 form a his-rich loop region; it reads HGGHGHSHGS…HGQDYCHDDH (63 aa). The Cytoplasmic segment spans residues 162-238; that stretch reads GGHGHSHGSG…TGSSKQILQG (77 aa). The segment at 185 to 214 is disordered; that stretch reads HGHSHRGHGHSHEHKHGHTHDHGHSHGLSH. Residues 186 to 211 are compositionally biased toward basic residues; it reads GHSHRGHGHSHEHKHGHTHDHGHSHG. Residues 239 to 259 traverse the membrane as a helical segment; it reads VFLHIVADTLGSIGVIISAIL. Residues 260-264 lie on the Lumenal side of the membrane; sequence MQNYG. The helical transmembrane segment at 265–285 threads the bilayer; sequence LMIADPICSMLIALLIGVSIV. Residues 286 to 378 lie on the Cytoplasmic side of the membrane; the sequence is PLLKESIGIL…LYIQIDVAAM (93 aa).

The protein belongs to the cation diffusion facilitator (CDF) transporter (TC 2.A.4) family. SLC30A subfamily. Homooligomer.

The protein localises to the golgi apparatus membrane. The protein resides in the cytoplasmic vesicle. Its subcellular location is the golgi apparatus. It localises to the trans-Golgi network. It is found in the sarcoplasmic reticulum. The protein localises to the mitochondrion. The catalysed reaction is Zn(2+)(in) = Zn(2+)(out). In terms of biological role, zinc ion transporter mediating zinc entry from the cytosol into the lumen of organelles along the secretory pathway. By contributing to zinc ion homeostasis within the early secretory pathway, regulates the activation and folding of enzymes like alkaline phosphatases. This chain is Zinc transporter 7 (SLC30A7), found in Gallus gallus (Chicken).